The following is a 158-amino-acid chain: Phosphopantetheine adenylyltransferase (158 aa).

Ser8 contacts substrate. ATP-binding positions include 8-9 (SF) and His16. 3 residues coordinate substrate: Lys40, Thr72, and Arg86. Residues 87–89 (GLR), Glu97, and 122–128 (HSFLSSS) contribute to the ATP site.

Belongs to the bacterial CoaD family. As to quaternary structure, homohexamer. Mg(2+) is required as a cofactor.

The protein localises to the cytoplasm. It carries out the reaction (R)-4'-phosphopantetheine + ATP + H(+) = 3'-dephospho-CoA + diphosphate. Its pathway is cofactor biosynthesis; coenzyme A biosynthesis; CoA from (R)-pantothenate: step 4/5. In terms of biological role, reversibly transfers an adenylyl group from ATP to 4'-phosphopantetheine, yielding dephospho-CoA (dPCoA) and pyrophosphate. The protein is Phosphopantetheine adenylyltransferase of Prochlorococcus marinus (strain NATL1A).